A 716-amino-acid chain; its full sequence is Amino-acid acetyltransferase, mitochondrial (716 aa).

Residues 1–44 (MSLHTGWPRTVNSSFLKKHRSSLCTCQHTSSVLPRSFSTTPDRH) constitute a mitochondrion transit peptide. The segment covering 37 to 56 (FSTTPDRHVQQSADFSSTSR) has biased composition (polar residues). Disordered regions lie at residues 37–58 (FSTTPDRHVQQSADFSSTSRSY) and 96–121 (KAQHPKSPDANKPEPEKSATAPTLPS). Over residues 101–112 (KSPDANKPEPEK) the composition is skewed to basic and acidic residues. The N-acetyltransferase domain maps to 537-706 (SRPRLKLDDP…YEAVCRSIQP (170 aa)).

Belongs to the acetyltransferase family.

It is found in the mitochondrion. It catalyses the reaction L-glutamate + acetyl-CoA = N-acetyl-L-glutamate + CoA + H(+). Its pathway is amino-acid biosynthesis; L-arginine biosynthesis; N(2)-acetyl-L-ornithine from L-glutamate: step 1/4. In terms of biological role, N-acetylglutamate synthase involved in arginine biosynthesis. This Aspergillus fumigatus (strain CBS 144.89 / FGSC A1163 / CEA10) (Neosartorya fumigata) protein is Amino-acid acetyltransferase, mitochondrial (arg2).